The primary structure comprises 342 residues: N-acetyl-gamma-glutamyl-phosphate reductase (342 aa).

C146 is a catalytic residue.

This sequence belongs to the NAGSA dehydrogenase family. Type 1 subfamily.

It is found in the cytoplasm. It carries out the reaction N-acetyl-L-glutamate 5-semialdehyde + phosphate + NADP(+) = N-acetyl-L-glutamyl 5-phosphate + NADPH + H(+). Its pathway is amino-acid biosynthesis; L-arginine biosynthesis; N(2)-acetyl-L-ornithine from L-glutamate: step 3/4. Its function is as follows. Catalyzes the NADPH-dependent reduction of N-acetyl-5-glutamyl phosphate to yield N-acetyl-L-glutamate 5-semialdehyde. The polypeptide is N-acetyl-gamma-glutamyl-phosphate reductase (Streptomyces avermitilis (strain ATCC 31267 / DSM 46492 / JCM 5070 / NBRC 14893 / NCIMB 12804 / NRRL 8165 / MA-4680)).